The sequence spans 190 residues: Holliday junction branch migration complex subunit RuvA (190 aa).

The domain I stretch occupies residues 1-65 (MIGNLSGIVD…ENVAQLYGFI (65 aa)). Residues 66–143 (SKEEQQCLRL…KLEINNNNFH (78 aa)) form a domain II region. The segment at 144 to 147 (PINE) is flexible linker. A domain III region spans residues 147–190 (EDALSALINLGYEKMKAYDTIKKYRPNLDTKDIIRMALKELSIL).

It belongs to the RuvA family. As to quaternary structure, homotetramer. Forms an RuvA(8)-RuvB(12)-Holliday junction (HJ) complex. HJ DNA is sandwiched between 2 RuvA tetramers; dsDNA enters through RuvA and exits via RuvB. An RuvB hexamer assembles on each DNA strand where it exits the tetramer. Each RuvB hexamer is contacted by two RuvA subunits (via domain III) on 2 adjacent RuvB subunits; this complex drives branch migration. In the full resolvosome a probable DNA-RuvA(4)-RuvB(12)-RuvC(2) complex forms which resolves the HJ.

The protein localises to the cytoplasm. Its function is as follows. The RuvA-RuvB-RuvC complex processes Holliday junction (HJ) DNA during genetic recombination and DNA repair, while the RuvA-RuvB complex plays an important role in the rescue of blocked DNA replication forks via replication fork reversal (RFR). RuvA specifically binds to HJ cruciform DNA, conferring on it an open structure. The RuvB hexamer acts as an ATP-dependent pump, pulling dsDNA into and through the RuvAB complex. HJ branch migration allows RuvC to scan DNA until it finds its consensus sequence, where it cleaves and resolves the cruciform DNA. The sequence is that of Holliday junction branch migration complex subunit RuvA from Wolbachia pipientis wMel.